The chain runs to 169 residues: Non-specific lipid transfer protein GPI-anchored 11 (169 aa).

The first 23 residues, 1–23, serve as a signal peptide directing secretion; sequence MAYATILMIFSVVALMSGERAHA. Intrachain disulfides connect Cys-27-Cys-70, Cys-37-Cys-54, Cys-55-Cys-95, and Cys-68-Cys-105. Ser-146 carries the GPI-anchor amidated serine lipid modification. The propeptide at 147 to 169 is removed in mature form; it reads SDASLLSVSFAFVIFMALISSFY.

Belongs to the plant LTP family. Expressed in a vascular-specific manner, mainly in roots, and, to a lower extent, in hypocotyls, seedlings stems and flowers.

It localises to the cell membrane. Its subcellular location is the secreted. Functionally, probable lipid transfer protein. Proteoglycan-like factor that exhibits xylogen activity consisting in mediating local and inductive cell-cell interactions required for xylem differentiation. This is Non-specific lipid transfer protein GPI-anchored 11 from Arabidopsis thaliana (Mouse-ear cress).